A 244-amino-acid polypeptide reads, in one-letter code: Na(+)-translocating NADH-quinone reductase subunit E (244 aa).

Helical transmembrane passes span 11 to 31, 47 to 67, 90 to 110, 123 to 143, 153 to 173, and 189 to 209; these read LLGIFLQATFIQNILLSTFLG, GLGMSVALVLTITGSINWLIH, FLELITFIVVIAAFTQILELL, GIFLPLIAVNCAILGGVLFGI, VVFSLGSGCGWWLAIVLFATI, and MGISFITTGLIAMAFMGLTGI.

It belongs to the NqrDE/RnfAE family. In terms of assembly, composed of six subunits; NqrA, NqrB, NqrC, NqrD, NqrE and NqrF.

The protein resides in the cell inner membrane. It carries out the reaction a ubiquinone + n Na(+)(in) + NADH + H(+) = a ubiquinol + n Na(+)(out) + NAD(+). NQR complex catalyzes the reduction of ubiquinone-1 to ubiquinol by two successive reactions, coupled with the transport of Na(+) ions from the cytoplasm to the periplasm. NqrA to NqrE are probably involved in the second step, the conversion of ubisemiquinone to ubiquinol. This Chlamydia muridarum (strain MoPn / Nigg) protein is Na(+)-translocating NADH-quinone reductase subunit E.